Here is a 418-residue protein sequence, read N- to C-terminus: Serine hydroxymethyltransferase (418 aa).

(6S)-5,6,7,8-tetrahydrofolate-binding positions include Leu121 and 125–127 (GHL). An N6-(pyridoxal phosphate)lysine modification is found at Lys230. 356-358 (SPF) lines the (6S)-5,6,7,8-tetrahydrofolate pocket.

Belongs to the SHMT family. In terms of assembly, homodimer. The cofactor is pyridoxal 5'-phosphate.

Its subcellular location is the cytoplasm. The enzyme catalyses (6R)-5,10-methylene-5,6,7,8-tetrahydrofolate + glycine + H2O = (6S)-5,6,7,8-tetrahydrofolate + L-serine. Its pathway is one-carbon metabolism; tetrahydrofolate interconversion. It functions in the pathway amino-acid biosynthesis; glycine biosynthesis; glycine from L-serine: step 1/1. Functionally, catalyzes the reversible interconversion of serine and glycine with tetrahydrofolate (THF) serving as the one-carbon carrier. This reaction serves as the major source of one-carbon groups required for the biosynthesis of purines, thymidylate, methionine, and other important biomolecules. Also exhibits THF-independent aldolase activity toward beta-hydroxyamino acids, producing glycine and aldehydes, via a retro-aldol mechanism. This chain is Serine hydroxymethyltransferase, found in Shewanella pealeana (strain ATCC 700345 / ANG-SQ1).